The primary structure comprises 255 residues: 1-(5-phosphoribosyl)-5-[(5-phosphoribosylamino)methylideneamino] imidazole-4-carboxamide isomerase (255 aa).

Residue Asp12 is the Proton acceptor of the active site. The active-site Proton donor is Asp131.

It belongs to the HisA/HisF family.

It localises to the cytoplasm. It carries out the reaction 1-(5-phospho-beta-D-ribosyl)-5-[(5-phospho-beta-D-ribosylamino)methylideneamino]imidazole-4-carboxamide = 5-[(5-phospho-1-deoxy-D-ribulos-1-ylimino)methylamino]-1-(5-phospho-beta-D-ribosyl)imidazole-4-carboxamide. It participates in amino-acid biosynthesis; L-histidine biosynthesis; L-histidine from 5-phospho-alpha-D-ribose 1-diphosphate: step 4/9. The protein is 1-(5-phosphoribosyl)-5-[(5-phosphoribosylamino)methylideneamino] imidazole-4-carboxamide isomerase of Cutibacterium acnes (strain DSM 16379 / KPA171202) (Propionibacterium acnes).